A 454-amino-acid polypeptide reads, in one-letter code: Bifunctional protein GlmU (454 aa).

A pyrophosphorylase region spans residues 1 to 226 (MSLEIVILAA…AMEVQGVNDR (226 aa)). UDP-N-acetyl-alpha-D-glucosamine-binding positions include 8–11 (LAAG), Lys-22, Gln-73, 78–79 (GT), 99–101 (YGD), Gly-136, Glu-151, Asn-166, and Asn-224. Residue Asp-101 participates in Mg(2+) binding. Asn-224 provides a ligand contact to Mg(2+). Positions 227 to 247 (MQQAQLERHYQRLRAEELMRQ) are linker. The interval 248 to 454 (GVTLLDPQRL…NWKRPEKIRK (207 aa)) is N-acetyltransferase. The UDP-N-acetyl-alpha-D-glucosamine site is built by Arg-330 and Lys-348. His-360 serves as the catalytic Proton acceptor. Residues Tyr-363 and Asn-374 each contribute to the UDP-N-acetyl-alpha-D-glucosamine site. Acetyl-CoA-binding positions include Ala-377, 383-384 (NY), Ser-402, Ala-420, and Arg-437.

This sequence in the N-terminal section; belongs to the N-acetylglucosamine-1-phosphate uridyltransferase family. The protein in the C-terminal section; belongs to the transferase hexapeptide repeat family. In terms of assembly, homotrimer. Mg(2+) serves as cofactor.

It localises to the cytoplasm. The catalysed reaction is alpha-D-glucosamine 1-phosphate + acetyl-CoA = N-acetyl-alpha-D-glucosamine 1-phosphate + CoA + H(+). It carries out the reaction N-acetyl-alpha-D-glucosamine 1-phosphate + UTP + H(+) = UDP-N-acetyl-alpha-D-glucosamine + diphosphate. It functions in the pathway nucleotide-sugar biosynthesis; UDP-N-acetyl-alpha-D-glucosamine biosynthesis; N-acetyl-alpha-D-glucosamine 1-phosphate from alpha-D-glucosamine 6-phosphate (route II): step 2/2. Its pathway is nucleotide-sugar biosynthesis; UDP-N-acetyl-alpha-D-glucosamine biosynthesis; UDP-N-acetyl-alpha-D-glucosamine from N-acetyl-alpha-D-glucosamine 1-phosphate: step 1/1. It participates in bacterial outer membrane biogenesis; LPS lipid A biosynthesis. In terms of biological role, catalyzes the last two sequential reactions in the de novo biosynthetic pathway for UDP-N-acetylglucosamine (UDP-GlcNAc). The C-terminal domain catalyzes the transfer of acetyl group from acetyl coenzyme A to glucosamine-1-phosphate (GlcN-1-P) to produce N-acetylglucosamine-1-phosphate (GlcNAc-1-P), which is converted into UDP-GlcNAc by the transfer of uridine 5-monophosphate (from uridine 5-triphosphate), a reaction catalyzed by the N-terminal domain. In Pseudomonas paraeruginosa (strain DSM 24068 / PA7) (Pseudomonas aeruginosa (strain PA7)), this protein is Bifunctional protein GlmU.